The primary structure comprises 118 residues: uncharacterized protein (118 aa).

Transmembrane regions (helical) follow at residues 5–20, 25–42, 53–73, and 83–103; these read IVFY…SVVM, VIRT…LLYF, ALAI…FIIL, and LFFT…SLSI.

Its subcellular location is the cell membrane. This is an uncharacterized protein from Bacillus subtilis (strain 168).